Consider the following 101-residue polypeptide: Large ribosomal subunit protein eL43 (101 aa).

The C4-type zinc-finger motif lies at 40–62 (CPSCRSLVRLQRIAFGIWKCPKC).

This sequence belongs to the eukaryotic ribosomal protein eL43 family. Requires Zn(2+) as cofactor.

This is Large ribosomal subunit protein eL43 from Pyrobaculum neutrophilum (strain DSM 2338 / JCM 9278 / NBRC 100436 / V24Sta) (Thermoproteus neutrophilus).